Consider the following 308-residue polypeptide: tRNA dimethylallyltransferase (308 aa).

Residue 8–15 (GPTGTGKS) participates in ATP binding. 10–15 (TGTGKS) contributes to the substrate binding site.

The protein belongs to the IPP transferase family. As to quaternary structure, monomer. The cofactor is Mg(2+).

The enzyme catalyses adenosine(37) in tRNA + dimethylallyl diphosphate = N(6)-dimethylallyladenosine(37) in tRNA + diphosphate. Its function is as follows. Catalyzes the transfer of a dimethylallyl group onto the adenine at position 37 in tRNAs that read codons beginning with uridine, leading to the formation of N6-(dimethylallyl)adenosine (i(6)A). In Mycolicibacterium vanbaalenii (strain DSM 7251 / JCM 13017 / BCRC 16820 / KCTC 9966 / NRRL B-24157 / PYR-1) (Mycobacterium vanbaalenii), this protein is tRNA dimethylallyltransferase.